Consider the following 358-residue polypeptide: Membrane-bound lytic murein transglycosylase C (358 aa).

An N-terminal signal peptide occupies residues 1-16; sequence MKKILALLVIAPLLIS. Cysteine 17 carries N-palmitoyl cysteine lipidation. A lipid anchor (S-diacylglycerol cysteine) is attached at cysteine 17.

It belongs to the transglycosylase Slt family.

It localises to the cell outer membrane. It carries out the reaction Exolytic cleavage of the (1-&gt;4)-beta-glycosidic linkage between N-acetylmuramic acid (MurNAc) and N-acetylglucosamine (GlcNAc) residues in peptidoglycan, from either the reducing or the non-reducing ends of the peptidoglycan chains, with concomitant formation of a 1,6-anhydrobond in the MurNAc residue.. Murein-degrading enzyme. May play a role in recycling of muropeptides during cell elongation and/or cell division. The sequence is that of Membrane-bound lytic murein transglycosylase C from Serratia proteamaculans (strain 568).